A 149-amino-acid chain; its full sequence is Calmodulin (149 aa).

Alanine 2 bears the N-acetylalanine mark. 4 consecutive EF-hand domains span residues 8-43 (EQVS…LGQN), 44-79 (PSES…KMKD), 81-116 (DSEE…IGEK), and 117-149 (LTDD…MMQK). Ca(2+) is bound by residues aspartate 21, aspartate 23, aspartate 25, glutamine 27, glutamate 32, aspartate 57, aspartate 59, asparagine 61, threonine 63, glutamate 68, aspartate 94, aspartate 96, asparagine 98, glutamate 105, aspartate 130, aspartate 132, aspartate 134, arginine 136, and glutamate 141.

Belongs to the calmodulin family.

Calmodulin mediates the control of a large number of enzymes, ion channels and other proteins by Ca(2+). Among the enzymes to be stimulated by the calmodulin-Ca(2+) complex are a number of protein kinases and phosphatases. The sequence is that of Calmodulin from Colletotrichum gloeosporioides (Anthracnose fungus).